Here is a 424-residue protein sequence, read N- to C-terminus: S-adenosylmethionine synthase (424 aa).

Position 14 (His14) interacts with ATP. Asp16 lines the Mg(2+) pocket. K(+) is bound at residue Glu42. L-methionine-binding residues include Glu55 and Gln98. Residues 98 to 108 (QSNDISRGIER) form a flexible loop region. ATP-binding positions include 165–167 (DAK), 242–243 (KF), Asp251, 257–258 (RK), Ala274, and Lys278. Asp251 serves as a coordination point for L-methionine. Lys282 lines the L-methionine pocket.

This sequence belongs to the AdoMet synthase family. In terms of assembly, homotetramer; dimer of dimers. Mg(2+) is required as a cofactor. The cofactor is K(+).

It localises to the cytoplasm. The enzyme catalyses L-methionine + ATP + H2O = S-adenosyl-L-methionine + phosphate + diphosphate. Its pathway is amino-acid biosynthesis; S-adenosyl-L-methionine biosynthesis; S-adenosyl-L-methionine from L-methionine: step 1/1. Catalyzes the formation of S-adenosylmethionine (AdoMet) from methionine and ATP. The overall synthetic reaction is composed of two sequential steps, AdoMet formation and the subsequent tripolyphosphate hydrolysis which occurs prior to release of AdoMet from the enzyme. This chain is S-adenosylmethionine synthase, found in Azobacteroides pseudotrichonymphae genomovar. CFP2.